We begin with the raw amino-acid sequence, 196 residues long: Peptide methionine sulfoxide reductase (196 aa).

Positions 1-14 are enriched in polar residues; it reads MEGNNSSSKSTTNP. The interval 1–23 is disordered; sequence MEGNNSSSKSTTNPALDPDLDSP.

The protein belongs to the MsrA Met sulfoxide reductase family.

It catalyses the reaction L-methionyl-[protein] + [thioredoxin]-disulfide + H2O = L-methionyl-(S)-S-oxide-[protein] + [thioredoxin]-dithiol. The catalysed reaction is [thioredoxin]-disulfide + L-methionine + H2O = L-methionine (S)-S-oxide + [thioredoxin]-dithiol. Its function is as follows. Has an important function as a repair enzyme for proteins that have been inactivated by oxidation. Catalyzes the reversible oxidation-reduction of methionine sulfoxide in proteins to methionine. This chain is Peptide methionine sulfoxide reductase (E4), found in Solanum lycopersicum (Tomato).